We begin with the raw amino-acid sequence, 463 residues long: Methionine aminopeptidase 2-1 (463 aa).

Residues 1–98 (MGSKTPEEQI…PPRVPLSDLF (98 aa)) form a disordered region. Residues 30–45 (RGTHLSRDGDGSLGDH) show a composition bias toward basic and acidic residues. Over residues 46–55 (GDDDDADEDD) the composition is skewed to acidic residues. The span at 69-81 (KKKKRPKKKKKPA) shows a compositional bias: basic residues. Residue His-214 coordinates substrate. 3 residues coordinate a divalent metal cation: Asp-235, Asp-246, and His-315. His-323 provides a ligand contact to substrate. Residues Glu-348 and Glu-444 each contribute to the a divalent metal cation site.

Belongs to the peptidase M24A family. Methionine aminopeptidase eukaryotic type 2 subfamily. Requires Co(2+) as cofactor. The cofactor is Zn(2+). Mn(2+) is required as a cofactor. Fe(2+) serves as cofactor.

It is found in the cytoplasm. The enzyme catalyses Release of N-terminal amino acids, preferentially methionine, from peptides and arylamides.. Cotranslationally removes the N-terminal methionine from nascent proteins. The N-terminal methionine is often cleaved when the second residue in the primary sequence is small and uncharged (Met-Ala-, Cys, Gly, Pro, Ser, Thr, or Val). This is Methionine aminopeptidase 2-1 from Colletotrichum graminicola (strain M1.001 / M2 / FGSC 10212) (Maize anthracnose fungus).